A 178-amino-acid polypeptide reads, in one-letter code: ATP-dependent protease subunit HslV (178 aa).

Residue Thr-7 is part of the active site. Na(+) contacts are provided by Gly-162, Cys-165, and Thr-168.

This sequence belongs to the peptidase T1B family. HslV subfamily. A double ring-shaped homohexamer of HslV is capped on each side by a ring-shaped HslU homohexamer. The assembly of the HslU/HslV complex is dependent on binding of ATP.

The protein resides in the cytoplasm. It carries out the reaction ATP-dependent cleavage of peptide bonds with broad specificity.. Its activity is regulated as follows. Allosterically activated by HslU binding. In terms of biological role, protease subunit of a proteasome-like degradation complex believed to be a general protein degrading machinery. In Burkholderia cenocepacia (strain ATCC BAA-245 / DSM 16553 / LMG 16656 / NCTC 13227 / J2315 / CF5610) (Burkholderia cepacia (strain J2315)), this protein is ATP-dependent protease subunit HslV.